Reading from the N-terminus, the 51-residue chain is Ovomucoid (51 aa).

One can recognise a Kazal-like domain in the interval 3–51; it reads VDCSGYPKPACTLEYFPLCGSDNQTYANKCTFCNAVVEKNVTLNHLGEC. 3 disulfides stabilise this stretch: cysteine 5/cysteine 35, cysteine 13/cysteine 32, and cysteine 21/cysteine 51. Residue asparagine 42 is glycosylated (N-linked (GlcNAc...) asparagine).

Its subcellular location is the secreted. In Nothoprocta perdicaria (Chilean tinamou), this protein is Ovomucoid.